A 732-amino-acid polypeptide reads, in one-letter code: Putative pectinesterase/pectinesterase inhibitor 28 (732 aa).

Residues 17-37 form a helical membrane-spanning segment; sequence VIISISSVLLISMVVAVTIGV. N-linked (GlcNAc...) asparagine glycosylation is found at N40, N93, N278, and N297. The tract at residues 51-204 is pectinesterase inhibitor 28; that stretch reads TTSVKAIKDV…VQLTHNGLAM (154 aa). The tract at residues 252–548 is pectinesterase 28; that stretch reads DIVVAQDGSG…FTPAQYIQGD (297 aa). Positions 327 and 357 each coordinate substrate. D380 acts as the Proton donor; for pectinesterase activity in catalysis. C394 and C414 are oxidised to a cystine. The active-site Nucleophile; for pectinesterase activity is the D401. N413 is a glycosylation site (N-linked (GlcNAc...) asparagine). Residues R469 and W471 each contribute to the substrate site. 3 N-linked (GlcNAc...) asparagine glycosylation sites follow: N566, N570, and N581. Composition is skewed to low complexity over residues 570–620 and 633–732; these read NSTV…PSTS and PSMV…SSIG. The tract at residues 570–732 is disordered; sequence NSTVTGSSLS…PSASPQSSIG (163 aa).

The protein in the N-terminal section; belongs to the PMEI family. In the C-terminal section; belongs to the pectinesterase family. Expressed in flower buds.

Its subcellular location is the membrane. It carries out the reaction [(1-&gt;4)-alpha-D-galacturonosyl methyl ester](n) + n H2O = [(1-&gt;4)-alpha-D-galacturonosyl](n) + n methanol + n H(+). It participates in glycan metabolism; pectin degradation; 2-dehydro-3-deoxy-D-gluconate from pectin: step 1/5. Acts in the modification of cell walls via demethylesterification of cell wall pectin. The chain is Putative pectinesterase/pectinesterase inhibitor 28 (PME28) from Arabidopsis thaliana (Mouse-ear cress).